The primary structure comprises 297 residues: MQRIALSDKLELSRIVYGMWRIGDDADTSPAHVQAKIEACLAQGITTMDQADIYGGYTAEAILGGGLKAAPGLRDKIEIVTKCGIVAPAGRHSSARVKHYDTTAGHINVSVEASLRDMGTDHVDLLLIHRPDPLIDAEETGKALDALVASGKVKAVGVSNFRPWDFSLLQSAMSNRLVTNQIEMSLLATDTFTNGDLAYLQEKRVSPMAWSPLGGGSLFSGAYGGTMAALQRIGKEQGVDATAVAIAWLLRHPAKIVPVLGTNNLERIRTAADALRVTMDRQTWFELYTLAIGKEVA.

Positions 20, 21, and 49 each coordinate NADP(+). Residue Y54 is the Proton donor of the active site. D-glucose-binding residues include Y54, K98, H129, and R130. S159, N160, Q181, S211, L213, G215, G261, T262, N263, and R267 together coordinate NADP(+).

This sequence belongs to the aldo/keto reductase family. In terms of assembly, homotrimer.

The catalysed reaction is D-glucose + NADP(+) = 6-dehydro-D-glucose + NADPH + H(+). Functionally, part of the sulfoquinovose monooxygenase (sulfo-SMO) pathway, a D-sulfoquinovose degradation pathway that enables the complete utilization of all carbons within sulfoquinovose (SQ) with concomitant production of inorganic sulfite. Catalyzes the NADP-dependent reduction of 6-dehydro-D-glucose to D-glucose. Cannot use NADH. This chain is 6-dehydroglucose reductase, found in Agrobacterium fabrum (strain C58 / ATCC 33970) (Agrobacterium tumefaciens (strain C58)).